The chain runs to 206 residues: Urease accessory protein UreG (206 aa).

Residue 14 to 21 participates in GTP binding; the sequence is GPVGSGKT.

Belongs to the SIMIBI class G3E GTPase family. UreG subfamily. As to quaternary structure, homodimer. UreD, UreF and UreG form a complex that acts as a GTP-hydrolysis-dependent molecular chaperone, activating the urease apoprotein by helping to assemble the nickel containing metallocenter of UreC. The UreE protein probably delivers the nickel.

It is found in the cytoplasm. Functionally, facilitates the functional incorporation of the urease nickel metallocenter. This process requires GTP hydrolysis, probably effectuated by UreG. This is Urease accessory protein UreG from Aliivibrio fischeri (strain ATCC 700601 / ES114) (Vibrio fischeri).